Consider the following 229-residue polypeptide: Potassium/proton antiporter CemA (229 aa).

4 consecutive transmembrane segments (helical) span residues 7 to 27, 107 to 127, 154 to 174, and 189 to 209; these read FNPL…SFSF, ILNF…YILG, ILLL…ELMI, and IISG…KYLI.

The protein belongs to the CemA family.

It is found in the plastid. Its subcellular location is the chloroplast inner membrane. It carries out the reaction K(+)(in) + H(+)(out) = K(+)(out) + H(+)(in). In terms of biological role, contributes to K(+)/H(+) antiport activity by supporting proton efflux to control proton extrusion and homeostasis in chloroplasts in a light-dependent manner to modulate photosynthesis. Prevents excessive induction of non-photochemical quenching (NPQ) under continuous-light conditions. Indirectly promotes efficient inorganic carbon uptake into chloroplasts. The protein is Potassium/proton antiporter CemA of Ranunculus macranthus (Large buttercup).